The primary structure comprises 389 residues: tRNA (guanine-N(7)-)-methyltransferase non-catalytic subunit TRM82 (389 aa).

WD repeat units lie at residues 44-86 (QNVP…HQLK), 134-179 (GHTS…KGFL), and 184-222 (QFVSQIHLFEICKESRLVSGGGEGKLFFWDWFREVLITE).

It belongs to the WD repeat TRM82 family. In terms of assembly, forms a heterodimer with the catalytic subunit TRM8.

The protein localises to the nucleus. Its pathway is tRNA modification; N(7)-methylguanine-tRNA biosynthesis. Functionally, required for the formation of N(7)-methylguanine at position 46 (m7G46) in tRNA. In the complex, it is required to stabilize and induce conformational changes of the catalytic subunit. The chain is tRNA (guanine-N(7)-)-methyltransferase non-catalytic subunit TRM82 from Lodderomyces elongisporus (strain ATCC 11503 / CBS 2605 / JCM 1781 / NBRC 1676 / NRRL YB-4239) (Yeast).